The primary structure comprises 454 residues: Bifunctional protein GlmU (454 aa).

The tract at residues 1–227 is pyrophosphorylase; it reads MKKLSVVILA…KMEVEGANNR (227 aa). UDP-N-acetyl-alpha-D-glucosamine is bound by residues 9 to 12, lysine 23, glutamine 74, 79 to 80, 101 to 103, glycine 138, glutamate 152, asparagine 167, and asparagine 225; these read LAAG, GT, and YGD. Position 103 (aspartate 103) interacts with Mg(2+). Mg(2+) is bound at residue asparagine 225. Residues 228-248 form a linker region; it reads LQLAALERYYQHKQAERLLLE. Residues 249–454 form an N-acetyltransferase region; that stretch reads GVMLIDPARF…AGWQRPTKKK (206 aa). Residues arginine 331 and lysine 349 each contribute to the UDP-N-acetyl-alpha-D-glucosamine site. The active-site Proton acceptor is histidine 361. Residues tyrosine 364 and asparagine 375 each contribute to the UDP-N-acetyl-alpha-D-glucosamine site. Acetyl-CoA contacts are provided by residues alanine 378, 384–385, serine 403, alanine 421, and arginine 438; that span reads NY.

This sequence in the N-terminal section; belongs to the N-acetylglucosamine-1-phosphate uridyltransferase family. It in the C-terminal section; belongs to the transferase hexapeptide repeat family. As to quaternary structure, homotrimer. Mg(2+) is required as a cofactor.

The protein localises to the cytoplasm. The enzyme catalyses alpha-D-glucosamine 1-phosphate + acetyl-CoA = N-acetyl-alpha-D-glucosamine 1-phosphate + CoA + H(+). The catalysed reaction is N-acetyl-alpha-D-glucosamine 1-phosphate + UTP + H(+) = UDP-N-acetyl-alpha-D-glucosamine + diphosphate. It functions in the pathway nucleotide-sugar biosynthesis; UDP-N-acetyl-alpha-D-glucosamine biosynthesis; N-acetyl-alpha-D-glucosamine 1-phosphate from alpha-D-glucosamine 6-phosphate (route II): step 2/2. Its pathway is nucleotide-sugar biosynthesis; UDP-N-acetyl-alpha-D-glucosamine biosynthesis; UDP-N-acetyl-alpha-D-glucosamine from N-acetyl-alpha-D-glucosamine 1-phosphate: step 1/1. It participates in bacterial outer membrane biogenesis; LPS lipid A biosynthesis. Catalyzes the last two sequential reactions in the de novo biosynthetic pathway for UDP-N-acetylglucosamine (UDP-GlcNAc). The C-terminal domain catalyzes the transfer of acetyl group from acetyl coenzyme A to glucosamine-1-phosphate (GlcN-1-P) to produce N-acetylglucosamine-1-phosphate (GlcNAc-1-P), which is converted into UDP-GlcNAc by the transfer of uridine 5-monophosphate (from uridine 5-triphosphate), a reaction catalyzed by the N-terminal domain. The chain is Bifunctional protein GlmU from Mannheimia succiniciproducens (strain KCTC 0769BP / MBEL55E).